The following is a 67-amino-acid chain: DNA-directed RNA polymerase subunit omega (67 aa).

Belongs to the RNA polymerase subunit omega family. In terms of assembly, the RNAP catalytic core consists of 2 alpha, 1 beta, 1 beta' and 1 omega subunit. When a sigma factor is associated with the core the holoenzyme is formed, which can initiate transcription.

The enzyme catalyses RNA(n) + a ribonucleoside 5'-triphosphate = RNA(n+1) + diphosphate. Its function is as follows. Promotes RNA polymerase assembly. Latches the N- and C-terminal regions of the beta' subunit thereby facilitating its interaction with the beta and alpha subunits. The protein is DNA-directed RNA polymerase subunit omega of Bordetella petrii (strain ATCC BAA-461 / DSM 12804 / CCUG 43448).